Reading from the N-terminus, the 566-residue chain is Arginine--tRNA ligase (566 aa).

A 'HIGH' region motif is present at residues 121–131 (ANPNGPFHIGH).

Belongs to the class-I aminoacyl-tRNA synthetase family.

It localises to the cytoplasm. It catalyses the reaction tRNA(Arg) + L-arginine + ATP = L-arginyl-tRNA(Arg) + AMP + diphosphate. The chain is Arginine--tRNA ligase from Methanococcus maripaludis (strain C5 / ATCC BAA-1333).